We begin with the raw amino-acid sequence, 527 residues long: EGF domain-specific O-linked N-acetylglucosamine transferase (527 aa).

An N-terminal signal peptide occupies residues 1 to 19 (MLMLLVFGVLLHEVPLSGQ). The Required for optimal activity motif lies at 295–297 (DYD). Residue asparagine 354 is glycosylated (N-linked (GlcNAc...) asparagine). The short motif at 524-527 (HDEL) is the Prevents secretion from ER element.

This sequence belongs to the glycosyltransferase 61 family. In terms of tissue distribution, widely expressed. Expressed in brain, heart, kidney, lung, skeletal muscles and thymus. Highest expression is observed in lung and the lowest in skeletal muscles.

It is found in the endoplasmic reticulum lumen. The enzyme catalyses L-seryl-[protein] + UDP-N-acetyl-alpha-D-glucosamine = 3-O-(N-acetyl-beta-D-glucosaminyl)-L-seryl-[protein] + UDP + H(+). The catalysed reaction is L-threonyl-[protein] + UDP-N-acetyl-alpha-D-glucosamine = 3-O-(N-acetyl-beta-D-glucosaminyl)-L-threonyl-[protein] + UDP + H(+). Catalyzes the transfer of a single N-acetylglucosamine from UDP-GlcNAc to a serine or threonine residue in extracellular proteins resulting in their modification with a beta-linked N-acetylglucosamine (O-GlcNAc). Specifically glycosylates the Thr residue located between the fifth and sixth conserved cysteines of folded EGF-like domains. This is EGF domain-specific O-linked N-acetylglucosamine transferase (Eogt) from Mus musculus (Mouse).